The sequence spans 562 residues: Long-chain-fatty-acid--CoA ligase (562 aa).

213-224 (YTGGTTGVAKGA) provides a ligand contact to ATP.

It belongs to the ATP-dependent AMP-binding enzyme family. Mg(2+) is required as a cofactor.

It localises to the membrane. The catalysed reaction is a long-chain fatty acid + ATP + CoA = a long-chain fatty acyl-CoA + AMP + diphosphate. It participates in lipid metabolism; fatty acid beta-oxidation. In terms of biological role, catalyzes the esterification, concomitant with transport, of exogenous long-chain fatty acids into metabolically active CoA thioesters for subsequent degradation or incorporation into phospholipids. The chain is Long-chain-fatty-acid--CoA ligase (fadD) from Yersinia pestis.